Consider the following 501-residue polypeptide: Ribose import ATP-binding protein RbsA (501 aa).

ABC transporter domains follow at residues 5–241 (LQLK…VGRK) and 252–495 (APGD…VGKL). Residue 37-44 (GENGAGKS) coordinates ATP.

It belongs to the ABC transporter superfamily. Ribose importer (TC 3.A.1.2.1) family. The complex is composed of an ATP-binding protein (RbsA), two transmembrane proteins (RbsC) and a solute-binding protein (RbsB).

It is found in the cell inner membrane. It catalyses the reaction D-ribose(out) + ATP + H2O = D-ribose(in) + ADP + phosphate + H(+). In terms of biological role, part of the ABC transporter complex RbsABC involved in ribose import. Responsible for energy coupling to the transport system. The polypeptide is Ribose import ATP-binding protein RbsA (Escherichia coli (strain UTI89 / UPEC)).